The sequence spans 252 residues: Type III pantothenate kinase (252 aa).

ATP is bound at residue 6-13 (DMGNTRLK). Residues tyrosine 93 and 100 to 103 (GVDR) contribute to the substrate site. Catalysis depends on aspartate 102, which acts as the Proton acceptor. Threonine 126 lines the ATP pocket. Position 179 (threonine 179) interacts with substrate.

It belongs to the type III pantothenate kinase family. As to quaternary structure, homodimer. NH4(+) serves as cofactor. K(+) is required as a cofactor.

It is found in the cytoplasm. It carries out the reaction (R)-pantothenate + ATP = (R)-4'-phosphopantothenate + ADP + H(+). It functions in the pathway cofactor biosynthesis; coenzyme A biosynthesis; CoA from (R)-pantothenate: step 1/5. Its function is as follows. Catalyzes the phosphorylation of pantothenate (Pan), the first step in CoA biosynthesis. This Cellvibrio japonicus (strain Ueda107) (Pseudomonas fluorescens subsp. cellulosa) protein is Type III pantothenate kinase.